Here is a 477-residue protein sequence, read N- to C-terminus: Argininosuccinate lyase (477 aa).

Belongs to the lyase 1 family. Argininosuccinate lyase subfamily.

Its subcellular location is the cytoplasm. The catalysed reaction is 2-(N(omega)-L-arginino)succinate = fumarate + L-arginine. The protein operates within amino-acid biosynthesis; L-arginine biosynthesis; L-arginine from L-ornithine and carbamoyl phosphate: step 3/3. The protein is Argininosuccinate lyase of Acinetobacter baumannii (strain ACICU).